Here is a 321-residue protein sequence, read N- to C-terminus: MFIMHHNSVLLHEAINALNINPSGIYIDGTFGLGGHSHYILSKLTSHGRLIAMDRDWSAVNIGEVLTKQDGRFSIIHAPFSKMLRCIYNMNLVGLINGILLDLGVCESQLTDSSRGFSFMRDGPLDMRMDNSVGQSAYEWIAKASQKDIEWVLRTFGEEKLSKKIARSIVLKREVYPIDRTSALSEIISDTVLYYNNRYNRRKHPATRSFLAIRIYINEELVEIMKILQDVFKLLAPGGRLVVISFNSLEDRIVKKFINQYSRVFAYPPKIPLTHTQLLHKYSGTMKFKNLGKIKPTVLEIKKNIRARSAILRYAEKLIYM.

S-adenosyl-L-methionine-binding positions include 34-36, Asp54, Phe80, Asp102, and Gln109; that span reads GGH.

Belongs to the methyltransferase superfamily. RsmH family.

The protein localises to the cytoplasm. It catalyses the reaction cytidine(1402) in 16S rRNA + S-adenosyl-L-methionine = N(4)-methylcytidine(1402) in 16S rRNA + S-adenosyl-L-homocysteine + H(+). In terms of biological role, specifically methylates the N4 position of cytidine in position 1402 (C1402) of 16S rRNA. The polypeptide is Ribosomal RNA small subunit methyltransferase H (Blochmanniella floridana).